The sequence spans 180 residues: CASP-like protein 5A1 (180 aa).

Residues 1–36 (MEVSHPAVHPVAVPPVLTEPPARVRMKDYQGMPGTL) lie on the Cytoplasmic side of the membrane. A helical membrane pass occupies residues 37 to 57 (GGLALRLGQLGFAVLSFSIMV). The Extracellular portion of the chain corresponds to 58 to 67 (STPDFSQVTA). Residues 68-88 (FCYLVAATVLQTLWSSITAVV) form a helical membrane-spanning segment. Residues 89–102 (DIYALSVRRSLHHS) are Cytoplasmic-facing. A helical membrane pass occupies residues 103-123 (LLVGLFAVGDGVTSTLTFAAA). The Extracellular segment spans residues 124–150 (CATAGITVLIDNDLDECGQNHCGRFEA). The chain crosses the membrane as a helical span at residues 151-171 (AAAMAFLSWIMAAPSFLLAFW). Residues 172-180 (SFGNKIVCF) are Cytoplasmic-facing.

Belongs to the Casparian strip membrane proteins (CASP) family. In terms of assembly, homodimer and heterodimers.

The protein resides in the cell membrane. In Pteridium aquilinum subsp. aquilinum (Bracken fern), this protein is CASP-like protein 5A1.